The sequence spans 497 residues: SPI-2 type 3 secretion system secretin (497 aa).

The signal sequence occupies residues 1 to 20 (MVVNKRLILILLFILNTAKS).

Belongs to the bacterial secretin family. T3SS SctC subfamily. In terms of assembly, the core secretion machinery of the T3SS is composed of approximately 20 different proteins, including cytoplasmic components, a base, an export apparatus and a needle. This subunit is part of the base, which anchors the injectisome in the bacterial cell envelope. Forms a stable homooligomeric complex.

The protein localises to the cell outer membrane. Functionally, component of the type III secretion system (T3SS), also called injectisome, which is used to inject bacterial effector proteins into eukaryotic host cells. Forms a ring-shaped multimeric structure with an apparent central pore in the outer membrane. Required for secretion of some type III-secreted effectors including the SpvB exotoxin. The polypeptide is SPI-2 type 3 secretion system secretin (Salmonella typhimurium (strain 14028s / SGSC 2262)).